The primary structure comprises 296 residues: Acetylglutamate kinase (296 aa).

Residues 69 to 70, Arg91, and Asn193 contribute to the substrate site; that span reads GG.

Belongs to the acetylglutamate kinase family. ArgB subfamily.

The protein resides in the cytoplasm. It catalyses the reaction N-acetyl-L-glutamate + ATP = N-acetyl-L-glutamyl 5-phosphate + ADP. It participates in amino-acid biosynthesis; L-arginine biosynthesis; N(2)-acetyl-L-ornithine from L-glutamate: step 2/4. Functionally, catalyzes the ATP-dependent phosphorylation of N-acetyl-L-glutamate. The sequence is that of Acetylglutamate kinase from Albidiferax ferrireducens (strain ATCC BAA-621 / DSM 15236 / T118) (Rhodoferax ferrireducens).